Consider the following 738-residue polypeptide: Melanotransferrin (738 aa).

The N-terminal stretch at 1–19 is a signal peptide; that stretch reads MRLLSVTFWLLLSLRTVVC. 2 Transferrin-like domains span residues 23–357 and 366–706; these read VQWC…GLLC and LRWC…GMLS. 2 disulfides stabilise this stretch: C26–C63 and C36–C54. The Fe(3+) site is built by D78 and Y107. A glycan (N-linked (GlcNAc...) asparagine) is linked at N118. 4 cysteine pairs are disulfide-bonded: C130–C216, C172–C189, C186–C199, and C257–C271. Residue T132 participates in hydrogencarbonate binding. N-linked (GlcNAc...) asparagine glycosylation occurs at N135. The hydrogencarbonate site is built by R136, V138, and G139. Y210 contacts Fe(3+). Residues H279 and Y451 each contribute to the Fe(3+) site. At S462 the chain carries Phosphoserine. N-linked (GlcNAc...) asparagine glycosylation occurs at N515. Positions 556 and 625 each coordinate Fe(3+). C709 carries the GPI-anchor amidated cysteine lipid modification. A propeptide spans 710–738 (removed in mature form); sequence SGAGAAVQRVPLLALLLLTLAAGLLPRVL.

This sequence belongs to the transferrin family.

It localises to the cell membrane. Its function is as follows. Involved in iron cellular uptake. Seems to be internalized and then recycled back to the cell membrane. Binds a single atom of iron per subunit. Could also bind zinc. This chain is Melanotransferrin (Meltf), found in Mus musculus (Mouse).